The primary structure comprises 450 residues: Ceramide glucosyltransferase (450 aa).

Residues 1–8 (MSDSGTLS) lie on the Lumenal side of the membrane. Residues 9 to 29 (LIGGIVFLVLWVVVWSICLLG) form a helical membrane-spanning segment. Over 30 to 337 (WRTARIRYAH…IRVRKKMTLA (308 aa)) the chain is Cytoplasmic. A short sequence motif (D1) is located at residue D96. Residue D148 is a short sequence motif, D2. Residue D286 is a short sequence motif, D3. The active-site Proton acceptor is D286. A (Q/R)XXRW motif is present at residues 323–327 (RRVRW). Residues 338 to 358 (ATLLEPLTESIISGLYGAWAI) traverse the membrane as a helical segment. The Lumenal segment spans residues 359 to 361 (SRL). Residues 362–382 (LGGNILPLFLLHMAAWISVDI) form a helical membrane-spanning segment. Over 383–401 (STKRALETNIKGIGPPESK) the chain is Cytoplasmic. The helical transmembrane segment at 402–422 (VTFLMAWAARECLALPIWMLA) threads the bilayer. The Lumenal portion of the chain corresponds to 423–450 (MTSSEVVWRGQKYKIIASGEAIRLGDRN).

The protein belongs to the glycosyltransferase 2 family.

It localises to the golgi apparatus membrane. The catalysed reaction is an N-acylsphing-4-enine + UDP-alpha-D-glucose = a beta-D-glucosyl-(1&lt;-&gt;1')-N-acylsphing-4-enine + UDP + H(+). It participates in lipid metabolism; sphingolipid metabolism. Catalyzes the final step in the biosynthesis of the membrane lipid glucosylceramide (GluCer), the transfer of glucose to ceramide. Glucosylceramides play important roles in growth, differentiation and pathogenicity. Essential factor in determining the success of fungal infection by regulating survival of yeast cells during the initial colonization of the host lung. The protein is Ceramide glucosyltransferase of Cryptococcus neoformans var. grubii serotype A (strain H99 / ATCC 208821 / CBS 10515 / FGSC 9487) (Filobasidiella neoformans var. grubii).